Reading from the N-terminus, the 356-residue chain is Tyrosine recombinase XerS (356 aa).

Positions 16–121 (IMPWYVLDYY…ALSSLYKYLT (106 aa)) constitute a Core-binding (CB) domain. One can recognise a Tyr recombinase domain in the interval 169 to 354 (AFLDYVDKEY…VNDEQKNALD (186 aa)). Residues Arg-210, Lys-234, His-306, Arg-309, and His-332 contribute to the active site. The active-site O-(3'-phospho-DNA)-tyrosine intermediate is the Tyr-341.

Belongs to the 'phage' integrase family. XerS subfamily.

The protein localises to the cytoplasm. With respect to regulation, ftsK is required for recombination. Functionally, site-specific tyrosine recombinase, which acts by catalyzing the cutting and rejoining of the recombining DNA molecules. Essential to convert dimers of the bacterial chromosome into monomers to permit their segregation at cell division. The sequence is that of Tyrosine recombinase XerS from Streptococcus pyogenes serotype M49 (strain NZ131).